A 200-amino-acid polypeptide reads, in one-letter code: 3-isopropylmalate dehydratase small subunit (200 aa).

It belongs to the LeuD family. LeuD type 1 subfamily. Heterodimer of LeuC and LeuD.

The catalysed reaction is (2R,3S)-3-isopropylmalate = (2S)-2-isopropylmalate. Its pathway is amino-acid biosynthesis; L-leucine biosynthesis; L-leucine from 3-methyl-2-oxobutanoate: step 2/4. Its function is as follows. Catalyzes the isomerization between 2-isopropylmalate and 3-isopropylmalate, via the formation of 2-isopropylmaleate. The sequence is that of 3-isopropylmalate dehydratase small subunit from Aliivibrio salmonicida (strain LFI1238) (Vibrio salmonicida (strain LFI1238)).